The sequence spans 473 residues: Phosphatidylserine synthase 2 (473 aa).

The interval 1-25 (MRRGERRVAGGSGSESPLLKGRRST) is disordered. The Cytoplasmic segment spans residues 1–40 (MRRGERRVAGGSGSESPLLKGRRSTESEVYDDGTNTFFWR). Phosphoserine is present on residues S12, S14, and S16. The helical transmembrane segment at 41 to 61 (AHTLTVLFILTCALGYVTLLE) threads the bilayer. Topologically, residues 62–74 (ETPQDTAYNTKRG) are lumenal. A helical membrane pass occupies residues 75 to 95 (IVASILVFLCFGVTQAKDGPF). Over 96–104 (SRPHPAYWR) the chain is Cytoplasmic. The helical transmembrane segment at 105 to 125 (FWLCVSVVYELFLIFILFQTV) threads the bilayer. Residues 126-291 (QDGRQFLKYV…EWKPASSLHR (166 aa)) lie on the Lumenal side of the membrane. N-linked (GlcNAc...) asparagine glycosylation occurs at N159. A helical membrane pass occupies residues 292–312 (WLAVCGIILVFLLAELNTFYL). A topological domain (cytoplasmic) is located at residue K313. The chain crosses the membrane as a helical span at residues 314 to 334 (FVLWMPPEHYLVLLRLVFFVN). Over 335 to 354 (VGGVAMREIYDFMDELKPHR) the chain is Lumenal. A helical transmembrane segment spans residues 355–375 (KLGQQAWLVAAITVTELLIVV). Topologically, residues 376-381 (KYDPHT) are cytoplasmic. Residues 382–402 (LTLSLPFYISQCWTLGSILVL) form a helical membrane-spanning segment. Residues 403-473 (TWTVWRFFLR…TAEEGTSAAS (71 aa)) are Lumenal-facing. The interval 422 to 473 (RRQKQQSHQARAVNNRDGHPGPDDDLLGTGTAEEEGTTNDGVTAEEGTSAAS) is disordered.

Belongs to the phosphatidyl serine synthase family. In terms of tissue distribution, highly expressed in testis. Detected at lower levels in kidney and heart.

The protein localises to the endoplasmic reticulum membrane. It is found in the membrane. The catalysed reaction is a 1,2-diacyl-sn-glycero-3-phosphoethanolamine + L-serine = a 1,2-diacyl-sn-glycero-3-phospho-L-serine + ethanolamine. It catalyses the reaction 1-hexadecanoyl-2-(9Z-octadecenoyl)-sn-glycero-3-phosphoethanolamine + L-serine = 1-hexadecanoyl-2-(9Z-octadecenoyl)-sn-glycero-3-phospho-L-serine + ethanolamine. The enzyme catalyses 1-hexadecanoyl-2-(4Z,7Z,10Z,13Z,16Z,19Z-docosahexaenoyl)-sn-glycero-3-phosphoethanolamine + L-serine = 1-hexadecanoyl-2-(4Z,7Z,10Z,13Z,16Z,19Z-docosahexaenoyl)-sn-glycero-3-phosphoserine + ethanolamine. It carries out the reaction 1-octadecanoyl-2-(5Z,8Z,11Z,14Z)-eicosatetraenoyl-sn-glycero-3-phosphoethanolamine + L-serine = 1-octadecanoyl-2-(5Z,8Z,11Z,14Z)-eicosatetraenoyl-sn-glycero-3-phosphoserine + ethanolamine. The catalysed reaction is 1-octadecanoyl-2-(4Z,7Z,10Z,13Z,16Z,19Z-docosahexaenoyl)-sn-glycero-3-phosphoethanolamine + L-serine = 1-octadecanoyl-2-(4Z,7Z,10Z,13Z,16Z,19Z-docosahexaenoyl)-sn-glycero-3-phosphoserine + ethanolamine. It catalyses the reaction 1-(1Z-octadecenyl)-2-(4Z,7Z,10Z,13Z,16Z,19Z-docosahexaenoyl)-sn-glycero-3-phosphoethanolamine + L-serine = 1-(1Z-octadecenyl)-2-(4Z,7Z,10Z,13Z,16Z,19Z-docosahexaenoyl)-sn-glycero-3-phospho-L-serine + ethanolamine. The enzyme catalyses 1-octadecanoyl-2-(9Z-octadecenoyl)-sn-glycero-3-phosphoethanolamine + L-serine = 1-octadecanoyl-2-(9Z-octadecenoyl)-sn-glycero-3-phospho-L-serine + ethanolamine. It carries out the reaction 1-(1Z-octadecenyl)-2-(9Z-octadecenoyl)-sn-glycero-3-phosphoethanolamine + L-serine = 1-(1Z-octadecenyl)-2-(9Z-octadecenoyl)-sn-glycero-3-phospho-L-serine + ethanolamine. The catalysed reaction is 1-(1Z-octadecenyl)-2-(5Z,8Z,11Z,14Z- eicosatetraenoyl)-sn-glycero-3-phosphoethanolamine + L-serine = 1-(1Z-octadecenyl)-2-(5Z,8Z,11Z,14Z-eicosatetraenoyl)-sn-glycero-3-phospho-L-serine + ethanolamine. The protein operates within phospholipid metabolism; phosphatidylserine biosynthesis. Its activity is regulated as follows. Almost complete inhibition by ethanolamine in both the mitochondria-associated membrane (MAM) and endoplasmic reticulum (ER) per se. Its function is as follows. Catalyzes a base-exchange reaction in which the polar head group of phosphatidylethanolamine (PE) or phosphatidylcholine (PC) is replaced by L-serine. Catalyzes the conversion of phosphatatidylethanolamine and does not act on phosphatidylcholine. Can utilize both phosphatidylethanolamine (PE) plasmalogen and diacyl PE as substrate and the latter is six times better utilized, indicating the importance of an ester linkage at the sn-1 position. Although it shows no sn-1 fatty acyl preference, exhibits significant preference towards docosahexaenoic acid (22:6n-3) compared with 18:1 or 20:4 at the sn-2 position. The protein is Phosphatidylserine synthase 2 (Ptdss2) of Mus musculus (Mouse).